The sequence spans 290 residues: Small ribosomal subunit biogenesis GTPase RsgA (290 aa).

The CP-type G domain occupies 62–213 (KNSLVRPPIV…IADTPGFSSL (152 aa)). Residues 111–114 (SKLD) and 156–164 (GQTGVGKST) each bind GTP. Positions 237, 242, 244, and 250 each coordinate Zn(2+).

It belongs to the TRAFAC class YlqF/YawG GTPase family. RsgA subfamily. Monomer. Associates with 30S ribosomal subunit, binds 16S rRNA. It depends on Zn(2+) as a cofactor.

It localises to the cytoplasm. Its function is as follows. One of several proteins that assist in the late maturation steps of the functional core of the 30S ribosomal subunit. Helps release RbfA from mature subunits. May play a role in the assembly of ribosomal proteins into the subunit. Circularly permuted GTPase that catalyzes slow GTP hydrolysis, GTPase activity is stimulated by the 30S ribosomal subunit. The chain is Small ribosomal subunit biogenesis GTPase RsgA from Streptococcus agalactiae serotype V (strain ATCC BAA-611 / 2603 V/R).